A 470-amino-acid polypeptide reads, in one-letter code: Uronate isomerase (470 aa).

It belongs to the metallo-dependent hydrolases superfamily. Uronate isomerase family.

It carries out the reaction D-glucuronate = D-fructuronate. It catalyses the reaction aldehydo-D-galacturonate = keto-D-tagaturonate. It functions in the pathway carbohydrate metabolism; pentose and glucuronate interconversion. In Salmonella heidelberg (strain SL476), this protein is Uronate isomerase.